The primary structure comprises 322 residues: Serine/threonine-protein phosphatase PP1-2 (322 aa).

Residues D60, H62, D88, and N120 each contribute to the Mn(2+) site. The active-site Proton donor is the H121. H169 and H244 together coordinate Mn(2+). Residues 298–322 (RQRVSQSSIKESKSATNSLKKSKNN) are disordered. A compositionally biased stretch (polar residues) spans 301-316 (VSQSSIKESKSATNSL).

This sequence belongs to the PPP phosphatase family. PP-1 subfamily. Mn(2+) is required as a cofactor.

It carries out the reaction O-phospho-L-seryl-[protein] + H2O = L-seryl-[protein] + phosphate. It catalyses the reaction O-phospho-L-threonyl-[protein] + H2O = L-threonyl-[protein] + phosphate. Essential role in cell cycle control. PP1 is perhaps required for exit from mitosis. This is Serine/threonine-protein phosphatase PP1-2 (sds21) from Schizosaccharomyces pombe (strain 972 / ATCC 24843) (Fission yeast).